We begin with the raw amino-acid sequence, 274 residues long: Large ribosomal subunit protein uL2c (274 aa).

2 disordered regions span residues 1–22 (MAIH…DNQV) and 225–274 (PVDH…RRSK).

Belongs to the universal ribosomal protein uL2 family. Part of the 50S ribosomal subunit.

The protein localises to the plastid. Its subcellular location is the chloroplast. The chain is Large ribosomal subunit protein uL2c (rpl2) from Silene latifolia (White campion).